A 546-amino-acid polypeptide reads, in one-letter code: Probable E3 ubiquitin-protein ligase NGR_a03640 (546 aa).

The interval 1-70 is disordered; sequence MNVQRPGLAV…RPWEGRPQEA (70 aa). Residues 1–248 are interaction with target proteins; it reads MNVQRPGLAV…YAGPQIFLPM (248 aa). Residues 22–48 are compositionally biased toward low complexity; it reads SEPGSPAAAARWVEASTEAEASAASSS. Basic and acidic residues predominate over residues 58-67; that stretch reads AEERPWEGRP. LRR repeat units follow at residues 104–125, 126–144, 145–166, 167–186, and 187–208; these read GLRRLNVNNNQLGDLPDTLPGT, LLELEASENRLTRLPDLPA, GLQRLNVENNRLTNLPEPLPAA, LEWLGAGYNQLTRLPEMIPP, and ELIWLGARNNQLTSVPESLLTQ. A linker region spans residues 249–256; that stretch reads GPVELARR. The 290-residue stretch at 257–546 folds into the NEL domain; sequence PLHEVVADWL…KVLRGRGLEL (290 aa). Positions 257 to 546 are E3 ubiquitin-protein ligase catalytic domain; it reads PLHEVVADWL…KVLRGRGLEL (290 aa). The active-site Glycyl thioester intermediate is Cys338.

Belongs to the LRR-containing bacterial E3 ligase family. In terms of processing, ubiquitinated in the presence of host E1 ubiquitin-activating enzyme, E2 ubiquitin-conjugating enzyme and ubiquitin.

The protein resides in the secreted. The protein localises to the host cytoplasm. Functionally, effector proteins function to alter host cell physiology and promote bacterial survival in host tissues. This protein is an E3 ubiquitin ligase that interferes with host's ubiquitination pathway. In Sinorhizobium fredii (strain NBRC 101917 / NGR234), this protein is Probable E3 ubiquitin-protein ligase NGR_a03640.